Consider the following 205-residue polypeptide: Holliday junction branch migration complex subunit RuvA (205 aa).

The tract at residues 1–64 (MIGKLKGIID…EDQIKLFGFR (64 aa)) is domain I. The domain II stretch occupies residues 65 to 143 (TDTEREWFRL…ALSAVDPAVV (79 aa)). Positions 144 to 154 (KLSGAIDDNRA) are flexible linker. A domain III region spans residues 154 to 205 (APRAVTDAISALVNLGYGQPQAAAAVATASRTAGEDAETAQLIKLGLKELSK).

This sequence belongs to the RuvA family. In terms of assembly, homotetramer. Forms an RuvA(8)-RuvB(12)-Holliday junction (HJ) complex. HJ DNA is sandwiched between 2 RuvA tetramers; dsDNA enters through RuvA and exits via RuvB. An RuvB hexamer assembles on each DNA strand where it exits the tetramer. Each RuvB hexamer is contacted by two RuvA subunits (via domain III) on 2 adjacent RuvB subunits; this complex drives branch migration. In the full resolvosome a probable DNA-RuvA(4)-RuvB(12)-RuvC(2) complex forms which resolves the HJ.

It localises to the cytoplasm. In terms of biological role, the RuvA-RuvB-RuvC complex processes Holliday junction (HJ) DNA during genetic recombination and DNA repair, while the RuvA-RuvB complex plays an important role in the rescue of blocked DNA replication forks via replication fork reversal (RFR). RuvA specifically binds to HJ cruciform DNA, conferring on it an open structure. The RuvB hexamer acts as an ATP-dependent pump, pulling dsDNA into and through the RuvAB complex. HJ branch migration allows RuvC to scan DNA until it finds its consensus sequence, where it cleaves and resolves the cruciform DNA. This is Holliday junction branch migration complex subunit RuvA from Rhodopseudomonas palustris (strain TIE-1).